Reading from the N-terminus, the 355-residue chain is Alanine racemase (355 aa).

The Proton acceptor; specific for D-alanine role is filled by lysine 34. Lysine 34 carries the post-translational modification N6-(pyridoxal phosphate)lysine. Arginine 133 serves as a coordination point for substrate. Residue tyrosine 249 is the Proton acceptor; specific for L-alanine of the active site. Residue methionine 297 participates in substrate binding.

This sequence belongs to the alanine racemase family. Pyridoxal 5'-phosphate serves as cofactor.

It carries out the reaction L-alanine = D-alanine. Its pathway is amino-acid biosynthesis; D-alanine biosynthesis; D-alanine from L-alanine: step 1/1. Its function is as follows. Catalyzes the interconversion of L-alanine and D-alanine. May also act on other amino acids. This chain is Alanine racemase (alr), found in Rickettsia peacockii (strain Rustic).